Here is an 841-residue protein sequence, read N- to C-terminus: Protein NLP6 (841 aa).

The RWP-RK domain occupies 539 to 624 (EAKTVKKSER…IDSVQGADGS (86 aa)). Residues 649-682 (NCPPTSTSPLSNLQDVKIENRDAEDSAGSSTSRA) form a disordered region. Positions 651–662 (PPTSTSPLSNLQ) are enriched in polar residues. The region spanning 741 to 823 (LVSIKATYRE…NTLRLSVHDV (83 aa)) is the PB1 domain.

It localises to the nucleus. Probable transcription factor. The sequence is that of Protein NLP6 (NLP6) from Arabidopsis thaliana (Mouse-ear cress).